The following is a 904-amino-acid chain: MRGGGLICALVVGALVAAVASAAPAAPAAPRASGGVAATVAANGGPASRPPPVPSPATTKARKRKTKKPPKRPEATPPPDANATVAAGHATLRAHLREIKVENADAQFYVCPPPTGATVVQFEQPRRCPTRPEGQNYTEGIAVVFKENIAPYKFKATMYYKDVTVSQVWFGHRYSQFMGIFEDRAPVPFEEVIDKINTKGVCRSTAKYVRNNMETTAFHRDDHETDMELKPAKVATRTSRGWHTTDLKYNPSRVEAFHRYGTTVNCIVEEVDARSVYPYDEFVLATGDFVYMSPFYGYREGSHTEHTSYAADRFKQVDGFYARDLTTKARATSPTTRNLLTTPKFTVAWDWVPKRPAVCTMTKWQEVDEMLRAEYGGSFRFSSDAISTTFTTNLTEYSLSRVDLGDCIGRDAREAIDRMFARKYNATHIKVGQPQYYLATGGFLIAYQPLLSNTLAELYVREYMREQDRKPRNATPAPLREAPSANASVERIKTTSSIEFARLQFTYNHIQRHVNDMLGRIAVAWCELQNHELTLWNEARKLNPNAIASATVGRRVSARMLGDVMAVSTCVPVAPDNVIVQNSMRVSSRPGTCYSRPLVSFRYEDQGPLIEGQLGENNELRLTRDALEPCTVGHRRYFIFGGGYVYFEEYAYSHQLSRADVTTVSTFIDLNITMLEDHEFVPLEVYTRHEIKDSGLLDYTEVQRRNQLHDLRFADIDTVIRADANAAMFAGLCAFFEGMGDLGRAVGKVVMGVVGGVVSAVSGVSSFMSNPFGALAVGLLVLAGLVAAFFAFRYVLQLQRNPMKALYPLTTKELKTSDPGGVGGEGEEGAEGGGFDEAKLAEAREMIRYMALVSAMERTEHKARKKGTSALLSSKVTNMVLRKRNKARYSPLHNEDEAGDEDEL.

An N-terminal signal peptide occupies residues 1–22 (MRGGGLICALVVGALVAAVASA). Topologically, residues 23-771 (APAAPAAPRA…SGVSSFMSNP (749 aa)) are virion surface. Residues 40–83 (VAANGGPASRPPPVPSPATTKARKRKTKKPPKRPEATPPPDANA) form a disordered region. Over residues 60–70 (KARKRKTKKPP) the composition is skewed to basic residues. N-linked (GlcNAc...) asparagine; by host glycans are attached at residues asparagine 82 and asparagine 136. 5 disulfide bridges follow: cysteine 111/cysteine 570, cysteine 128/cysteine 526, cysteine 202/cysteine 266, cysteine 359/cysteine 407, and cysteine 593/cysteine 630. 2 involved in fusion and/or binding to host membrane regions span residues 168–174 (VWFGHRY) and 253–260 (RVEAFHRY). N-linked (GlcNAc...) asparagine; by host glycans are attached at residues asparagine 393, asparagine 425, and asparagine 486. The interval 467 to 490 (QDRKPRNATPAPLREAPSANASVE) is disordered. N-linked (GlcNAc...) asparagine; by host glycosylation is present at asparagine 671. Hydrophobic membrane proximal region regions lie at residues 716–769 (IDTV…SFMS) and 728–768 (MFAG…SSFM). Residues 772 to 792 (FGALAVGLLVLAGLVAAFFAF) traverse the membrane as a helical segment. The Intravirion portion of the chain corresponds to 793–904 (RYVLQLQRNP…EDEAGDEDEL (112 aa)). The disordered stretch occupies residues 816 to 835 (TSDPGGVGGEGEEGAEGGGF). A Golgi targeting motif is present at residues 849–852 (YMAL). Residues 883–904 (KRNKARYSPLHNEDEAGDEDEL) form a disordered region. An Internalization motif motif is present at residues 889-892 (YSPL).

Belongs to the herpesviridae glycoprotein B family. In terms of assembly, homotrimer; disulfide-linked. Binds to heparan sulfate proteoglycans. Interacts with gH/gL heterodimer.

The protein localises to the virion membrane. It localises to the host cell membrane. The protein resides in the host endosome membrane. Its subcellular location is the host Golgi apparatus membrane. In terms of biological role, envelope glycoprotein that forms spikes at the surface of virion envelope. Essential for the initial attachment to heparan sulfate moieties of the host cell surface proteoglycans. Involved in fusion of viral and cellular membranes leading to virus entry into the host cell. Following initial binding to its host receptors, membrane fusion is mediated by the fusion machinery composed at least of gB and the heterodimer gH/gL. May be involved in the fusion between the virion envelope and the outer nuclear membrane during virion egress. This Homo sapiens (Human) protein is Envelope glycoprotein B.